The sequence spans 133 residues: Ribosome-binding factor A (133 aa).

The protein belongs to the RbfA family. Monomer. Binds 30S ribosomal subunits, but not 50S ribosomal subunits or 70S ribosomes.

It is found in the cytoplasm. Functionally, one of several proteins that assist in the late maturation steps of the functional core of the 30S ribosomal subunit. Associates with free 30S ribosomal subunits (but not with 30S subunits that are part of 70S ribosomes or polysomes). Required for efficient processing of 16S rRNA. May interact with the 5'-terminal helix region of 16S rRNA. The polypeptide is Ribosome-binding factor A (Escherichia coli O127:H6 (strain E2348/69 / EPEC)).